The primary structure comprises 104 residues: Transcription initiation factor IIA subunit 2 (104 aa).

It belongs to the TFIIA subunit 2 family. TFIIA is a heterodimer of the large unprocessed subunit 1 and a small subunit gamma.

Its subcellular location is the nucleus. Its function is as follows. TFIIA is a component of the transcription machinery of RNA polymerase II and plays an important role in transcriptional activation. TFIIA in a complex with TBP mediates transcriptional activity. The polypeptide is Transcription initiation factor IIA subunit 2 (Schistosoma mansoni (Blood fluke)).